Consider the following 420-residue polypeptide: Tyrosine--tRNA ligase (420 aa).

Tyr-33 provides a ligand contact to L-tyrosine. The short motif at 38 to 47 (PTADSLHIGH) is the 'HIGH' region element. L-tyrosine contacts are provided by Tyr-168 and Gln-172. Positions 231-235 (KFGKT) match the 'KMSKS' region motif. Lys-234 lines the ATP pocket. In terms of domain architecture, S4 RNA-binding spans 353-419 (MLLVDALIKV…GKKNYYLVKL (67 aa)).

The protein belongs to the class-I aminoacyl-tRNA synthetase family. TyrS type 1 subfamily. Homodimer.

It localises to the cytoplasm. The catalysed reaction is tRNA(Tyr) + L-tyrosine + ATP = L-tyrosyl-tRNA(Tyr) + AMP + diphosphate + H(+). In terms of biological role, catalyzes the attachment of tyrosine to tRNA(Tyr) in a two-step reaction: tyrosine is first activated by ATP to form Tyr-AMP and then transferred to the acceptor end of tRNA(Tyr). The polypeptide is Tyrosine--tRNA ligase (Desulfitobacterium hafniense (strain DSM 10664 / DCB-2)).